The sequence spans 171 residues: Urease accessory protein UreE (171 aa).

Positions 143–171 (SGGHQHHHGHDHDHGHHGHDHDHHHPDHE) are disordered. The span at 152-171 (HDHDHGHHGHDHDHHHPDHE) shows a compositional bias: basic and acidic residues.

This sequence belongs to the UreE family.

Its subcellular location is the cytoplasm. In terms of biological role, involved in urease metallocenter assembly. Binds nickel. Probably functions as a nickel donor during metallocenter assembly. The chain is Urease accessory protein UreE from Brucella abortus biovar 1 (strain 9-941).